The sequence spans 428 residues: Enolase (428 aa).

Gln163 contributes to the (2R)-2-phosphoglycerate binding site. Glu205 functions as the Proton donor in the catalytic mechanism. Mg(2+) is bound by residues Asp242, Glu285, and Asp312. Lys337, Arg366, Ser367, and Lys388 together coordinate (2R)-2-phosphoglycerate. Lys337 serves as the catalytic Proton acceptor.

Belongs to the enolase family. The cofactor is Mg(2+).

The protein resides in the cytoplasm. Its subcellular location is the secreted. It localises to the cell surface. It carries out the reaction (2R)-2-phosphoglycerate = phosphoenolpyruvate + H2O. Its pathway is carbohydrate degradation; glycolysis; pyruvate from D-glyceraldehyde 3-phosphate: step 4/5. Its function is as follows. Catalyzes the reversible conversion of 2-phosphoglycerate (2-PG) into phosphoenolpyruvate (PEP). It is essential for the degradation of carbohydrates via glycolysis. The sequence is that of Enolase from Moorella thermoacetica (strain ATCC 39073 / JCM 9320).